The sequence spans 401 residues: NALCN channel auxiliary factor 2 (401 aa).

The chain crosses the membrane as a helical span at residues 42–62 (LASLLFFTALLSDHLWLCAGG). N-linked (GlcNAc...) asparagine glycans are attached at residues Asn-77, Asn-97, Asn-153, and Asn-178. The chain crosses the membrane as a helical span at residues 362–382 (LCVLVLFLLHTFISITTLQHC).

Belongs to the NALF family.

Its subcellular location is the membrane. Probable component of the NALCN channel complex, a channel that regulates the resting membrane potential and controls neuronal excitability. The polypeptide is NALCN channel auxiliary factor 2 (nalf2) (Danio rerio (Zebrafish)).